The primary structure comprises 481 residues: Glutamate--tRNA ligase (481 aa).

Residues 9 to 19 carry the 'HIGH' region motif; it reads PSPTGNLHIGT. Residues 247–251 carry the 'KMSKS' region motif; that stretch reads KLSKR. Lysine 250 lines the ATP pocket.

It belongs to the class-I aminoacyl-tRNA synthetase family. Glutamate--tRNA ligase type 1 subfamily. In terms of assembly, monomer.

It is found in the cytoplasm. It carries out the reaction tRNA(Glu) + L-glutamate + ATP = L-glutamyl-tRNA(Glu) + AMP + diphosphate. In terms of biological role, catalyzes the attachment of glutamate to tRNA(Glu) in a two-step reaction: glutamate is first activated by ATP to form Glu-AMP and then transferred to the acceptor end of tRNA(Glu). This is Glutamate--tRNA ligase from Nostoc punctiforme (strain ATCC 29133 / PCC 73102).